Consider the following 741-residue polypeptide: Transketolase-1, chloroplastic (741 aa).

Residues 1 to 66 (MASTSSLALS…NRSLRPLVRA (66 aa)) constitute a chloroplast transit peptide. Positions 22–51 (GSDQRGSLPAFSGLKSTGSRASASSRRRIA) are disordered. The residue at position 67 (Ala-67) is an N-acetylalanine. Residue His-103 participates in substrate binding. Thiamine diphosphate contacts are provided by residues His-143 and 192–194 (GPL). Asp-233 contributes to the Mg(2+) binding site. Thiamine diphosphate is bound by residues Gly-234 and Asn-263. Mg(2+)-binding residues include Asn-263 and Ile-265. Substrate is bound at residue His-340. Residue His-340 coordinates thiamine diphosphate. Ser-428 is modified (phosphoserine). Arg-434 and Ser-461 together coordinate substrate. Residues Glu-488 and Phe-515 each coordinate thiamine diphosphate. Catalysis depends on Glu-488, which acts as the Proton donor. Residues His-539, Asp-547, and Arg-598 each coordinate substrate.

Belongs to the transketolase family. Homodimer. Mg(2+) serves as cofactor. Requires Ca(2+) as cofactor. It depends on Mn(2+) as a cofactor. The cofactor is Co(2+). Thiamine diphosphate is required as a cofactor.

The protein localises to the plastid. It localises to the chloroplast stroma. The enzyme catalyses D-sedoheptulose 7-phosphate + D-glyceraldehyde 3-phosphate = aldehydo-D-ribose 5-phosphate + D-xylulose 5-phosphate. It functions in the pathway carbohydrate biosynthesis; Calvin cycle. Its function is as follows. Catalyzes the reversible transfer of a two-carbon ketol group from fructose-6-phosphate or sedoheptulose-7-phosphate to glyceraldehyde-3-phosphate to yield xylulose-5-phosphate and erythrose-4-phosphate or ribose-5-phosphate, respectively. Could act as a stress sensor involved in adaptation process. In Arabidopsis thaliana (Mouse-ear cress), this protein is Transketolase-1, chloroplastic (TKL-1).